Consider the following 439-residue polypeptide: Ribosomal protein uS12 methylthiotransferase RimO (439 aa).

The MTTase N-terminal domain occupies 2-114 (SKLYLMSLGC…IDEMILKKTN (113 aa)). [4Fe-4S] cluster-binding residues include C11, C45, C77, C146, C150, and C153. The Radical SAM core domain maps to 132–363 (TGSNSHAFIK…VDEVIEKSFE (232 aa)).

Belongs to the methylthiotransferase family. RimO subfamily. Requires [4Fe-4S] cluster as cofactor.

It localises to the cytoplasm. The catalysed reaction is L-aspartate(89)-[ribosomal protein uS12]-hydrogen + (sulfur carrier)-SH + AH2 + 2 S-adenosyl-L-methionine = 3-methylsulfanyl-L-aspartate(89)-[ribosomal protein uS12]-hydrogen + (sulfur carrier)-H + 5'-deoxyadenosine + L-methionine + A + S-adenosyl-L-homocysteine + 2 H(+). Catalyzes the methylthiolation of an aspartic acid residue of ribosomal protein uS12. The protein is Ribosomal protein uS12 methylthiotransferase RimO of Campylobacter jejuni subsp. jejuni serotype O:6 (strain 81116 / NCTC 11828).